Here is a 117-residue protein sequence, read N- to C-terminus: Large ribosomal subunit protein bL20 (117 aa).

It belongs to the bacterial ribosomal protein bL20 family.

In terms of biological role, binds directly to 23S ribosomal RNA and is necessary for the in vitro assembly process of the 50S ribosomal subunit. It is not involved in the protein synthesizing functions of that subunit. The polypeptide is Large ribosomal subunit protein bL20 (Carboxydothermus hydrogenoformans (strain ATCC BAA-161 / DSM 6008 / Z-2901)).